The sequence spans 428 residues: Histone deacetylase 3 (428 aa).

Residues 3–316 (KTVAYFYDPD…WTYETSLLVE (314 aa)) are histone deacetylase. 1D-myo-inositol 1,4,5,6-tetrakisphosphate contacts are provided by histidine 17, glycine 21, and lysine 25. Residue histidine 135 is part of the active site. 3 residues coordinate Zn(2+): aspartate 170, histidine 172, and aspartate 259. Position 265 (arginine 265) interacts with 1D-myo-inositol 1,4,5,6-tetrakisphosphate. 2 stretches are compositionally biased toward basic and acidic residues: residues 388-405 (DRTD…ENYS) and 415-428 (DGDH…DVEI). The interval 388–428 (DRTDEADAEERGPEENYSRPEAPNEFYDGDHDNDKESDVEI) is disordered. Position 424 is a phosphoserine (serine 424).

It belongs to the histone deacetylase family. HD type 1 subfamily. In terms of assembly, interacts with HDAC7 and HDAC9. Interacts with DAXX, KDM4A, HDAC10 and DACH1. Found in a complex with NCOR1 and NCOR2. Component of the N-Cor repressor complex, at least composed of NCOR1, NCOR2, HDAC3, TBL1X, TBL1R, CORO2A and GPS2. Interacts with BCOR, MJD2A/JHDM3A, NRIP1, PRDM6 and SRY. Interacts with BTBD14B. Interacts with GLIS2. Interacts (via the DNA-binding domain) with NR2C1; the interaction recruits phosphorylated NR2C1 to PML bodies for sumoylation. Component of the Notch corepressor complex. Interacts with CBFA2T3 and NKAP. Interacts with APEX1; the interaction is not dependent on the acetylated status of APEX1. Interacts with ZMYND15. Interacts with SMRT/NCOR2 and BCL6 on DNA enhancer elements. Interacts with INSM1. Interacts with XBP1 isoform 1; the interaction occurs in endothelial cell (EC) under disturbed flow. Interacts (via C-terminus) with CCAR2 (via N-terminus). Interacts with and deacetylates MEF2D. Interacts with BEND3. Interacts with NKAPL. Interacts with DHX36; this interaction occurs in a RNA-dependent manner. Interacts weakly with CRY1; this interaction is enhanced in the presence of FBXL3. Interacts with FBXL3 and BMAL1. Interacts with NCOR1. Interacts with RARA. Interacts with SETD5. As to quaternary structure, (Microbial infection) Interacts with human cytomegalovirus (HHV-5) immediate early protein IE1; this interaction decreases histone acetylation and allows transcriptional activation by the virus. It depends on Zn(2+) as a cofactor. In terms of processing, sumoylated in vitro. Post-translationally, deubiquitinated on 'Lys-63'-linked ubiquitin chains by USP38; leading to a decreased level of histone acetylation. In terms of tissue distribution, widely expressed.

It localises to the nucleus. It is found in the chromosome. The protein resides in the cytoplasm. The protein localises to the cytosol. The enzyme catalyses N(6)-acetyl-L-lysyl-[histone] + H2O = L-lysyl-[histone] + acetate. The catalysed reaction is N(6)-acetyl-L-lysyl-[protein] + H2O = L-lysyl-[protein] + acetate. It catalyses the reaction N(6)-(2E)-butenoyl-L-lysyl-[protein] + H2O = (2E)-2-butenoate + L-lysyl-[protein]. It carries out the reaction N(6)-(2-hydroxyisobutanoyl)-L-lysyl-[protein] + H2O = 2-hydroxy-2-methylpropanoate + L-lysyl-[protein]. The enzyme catalyses N(6)-[(S)-lactoyl]-L-lysyl-[protein] + H2O = (S)-lactate + L-lysyl-[protein]. With respect to regulation, inositol tetraphosphate (1D-myo-inositol 1,4,5,6-tetrakisphosphate) promotes the histone deacetylase activity by acting as an intermolecular glue between HDAC3 and NCOR2, thereby promoting its association with the N-Cor complex, a prerequisite for the histone deacetylase activity. In terms of biological role, histone deacetylase that catalyzes the deacetylation of lysine residues on the N-terminal part of the core histones (H2A, H2B, H3 and H4), and some other non-histone substrates. Histone deacetylation gives a tag for epigenetic repression and plays an important role in transcriptional regulation, cell cycle progression and developmental events. Histone deacetylases act via the formation of large multiprotein complexes, such as N-Cor repressor complex, which activate the histone deacetylase activity. Participates in the BCL6 transcriptional repressor activity by deacetylating the H3 'Lys-27' (H3K27) on enhancer elements, antagonizing EP300 acetyltransferase activity and repressing proximal gene expression. Acts as a molecular chaperone for shuttling phosphorylated NR2C1 to PML bodies for sumoylation. Contributes, together with XBP1 isoform 1, to the activation of NFE2L2-mediated HMOX1 transcription factor gene expression in a PI(3)K/mTORC2/Akt-dependent signaling pathway leading to endothelial cell (EC) survival under disturbed flow/oxidative stress. Regulates both the transcriptional activation and repression phases of the circadian clock in a deacetylase activity-independent manner. During the activation phase, promotes the accumulation of ubiquitinated BMAL1 at the E-boxes and during the repression phase, blocks FBXL3-mediated CRY1/2 ubiquitination and promotes the interaction of CRY1 and BMAL1. The NCOR1-HDAC3 complex regulates the circadian expression of the core clock gene BMAL1 and the genes involved in lipid metabolism in the liver. Also functions as a deacetylase for non-histone targets, such as KAT5, MEF2D, MAPK14, RARA and STAT3. Serves as a corepressor of RARA, mediating its deacetylation and repression, leading to inhibition of RARE DNA element binding. In association with RARA, plays a role in the repression of microRNA-10a and thereby in the inflammatory response. In addition to protein deacetylase activity, also acts as a protein-lysine deacylase by recognizing other acyl groups: catalyzes removal of (2E)-butenoyl (crotonyl), lactoyl (lactyl) and 2-hydroxyisobutanoyl (2-hydroxyisobutyryl) acyl groups from lysine residues, leading to protein decrotonylation, delactylation and de-2-hydroxyisobutyrylation, respectively. Catalyzes decrotonylation of MAPRE1/EB1. Mediates delactylation NBN/NBS1, thereby inhibiting DNA double-strand breaks (DSBs) via homologous recombination (HR). In Homo sapiens (Human), this protein is Histone deacetylase 3 (HDAC3).